A 158-amino-acid polypeptide reads, in one-letter code: Protein E6 (158 aa).

Zinc fingers lie at residues 32–68 and 105–141; these read CVYC…CQKC and CMSC…CRHC. The short motif at 156 to 158 is the PDZ-binding domain element; the sequence is TQV.

Belongs to the papillomaviridae E6 protein family. Forms homodimers. Interacts with ubiquitin-protein ligase UBE3A/E6-AP and thus forms a complex with human TP53. Interacts with human NFX1 and MAGI3. Interacts with human IRF3; this interaction inhibits the establishment of antiviral state. Interacts with human TYK2; this interaction inhibits JAK-STAT activation by interferon alpha. Interacts with host DLG1; this interaction leads to the proteasomal degradation of DLG1.

It is found in the host cytoplasm. The protein localises to the host nucleus. Functionally, plays a major role in the induction and maintenance of cellular transformation. Acts mainly as an oncoprotein by stimulating the destruction of many host cell key regulatory proteins. E6 associates with host UBE3A/E6-AP ubiquitin-protein ligase, and inactivates tumor suppressors TP53 and TP73 by targeting them to the 26S proteasome for degradation. In turn, DNA damage and chromosomal instabilities increase and lead to cell proliferation and cancer development. The complex E6/E6AP targets several other substrates to degradation via the proteasome including host DLG1 or NFX1, a repressor of human telomerase reverse transcriptase (hTERT). The resulting increased expression of hTERT prevents the shortening of telomere length leading to cell immortalization. Other cellular targets including BAK1, Fas-associated death domain-containing protein (FADD) and procaspase 8, are degraded by E6/E6AP causing inhibition of apoptosis. E6 also inhibits immune response by interacting with host IRF3 and TYK2. These interactions prevent IRF3 transcriptional activities and inhibit TYK2-mediated JAK-STAT activation by interferon alpha resulting in inhibition of the interferon signaling pathway. The protein is Protein E6 of Homo sapiens (Human).